A 320-amino-acid polypeptide reads, in one-letter code: ATP-dependent 6-phosphofructokinase (320 aa).

Gly12 is an ATP binding site. 22 to 26 (RGVVR) is a binding site for ADP. ATP is bound by residues 73–74 (RF) and 103–106 (GDGS). Asp104 provides a ligand contact to Mg(2+). 126–128 (TID) is a substrate binding site. Asp128 functions as the Proton acceptor in the catalytic mechanism. Residue Arg155 coordinates ADP. Residues Arg163 and 170–172 (MGR) contribute to the substrate site. ADP is bound by residues 186-188 (GCE), Lys212, and 214-216 (KKH). Substrate-binding positions include Glu223, Arg244, and 250–253 (HIQR).

Belongs to the phosphofructokinase type A (PFKA) family. ATP-dependent PFK group I subfamily. Prokaryotic clade 'B1' sub-subfamily. Homotetramer. Mg(2+) is required as a cofactor.

The protein localises to the cytoplasm. It carries out the reaction beta-D-fructose 6-phosphate + ATP = beta-D-fructose 1,6-bisphosphate + ADP + H(+). Its pathway is carbohydrate degradation; glycolysis; D-glyceraldehyde 3-phosphate and glycerone phosphate from D-glucose: step 3/4. Allosterically activated by ADP and other diphosphonucleosides, and allosterically inhibited by phosphoenolpyruvate. Its function is as follows. Catalyzes the phosphorylation of D-fructose 6-phosphate to fructose 1,6-bisphosphate by ATP, the first committing step of glycolysis. The polypeptide is ATP-dependent 6-phosphofructokinase (Aliivibrio salmonicida (strain LFI1238) (Vibrio salmonicida (strain LFI1238))).